Here is a 166-residue protein sequence, read N- to C-terminus: UPF0304 protein VP0990 (166 aa).

This sequence belongs to the UPF0304 family.

In Vibrio parahaemolyticus serotype O3:K6 (strain RIMD 2210633), this protein is UPF0304 protein VP0990.